Reading from the N-terminus, the 129-residue chain is Small ribosomal subunit protein uS11 (129 aa).

It belongs to the universal ribosomal protein uS11 family. In terms of assembly, part of the 30S ribosomal subunit. Interacts with proteins S7 and S18. Binds to IF-3.

Its function is as follows. Located on the platform of the 30S subunit, it bridges several disparate RNA helices of the 16S rRNA. Forms part of the Shine-Dalgarno cleft in the 70S ribosome. The chain is Small ribosomal subunit protein uS11 from Photobacterium profundum (strain SS9).